Here is a 394-residue protein sequence, read N- to C-terminus: Probable fatty acid methyltransferase (394 aa).

Residues 128-129, 163-171, and 189-194 contribute to the S-adenosyl-L-methionine site; these read YS, LLDVGCGWG, and TLSKEQ. The active site involves Cys358.

The protein belongs to the CFA/CMAS family.

The sequence is that of Probable fatty acid methyltransferase from Pseudomonas putida (Arthrobacter siderocapsulatus).